The sequence spans 258 residues: MSALFWHTCGAGKRDLVLLHGWGLNAEVWRSIVPQLSAQFRLHLVDLPGYGRSGGDTPYSLAEMTQRVLAQAPERALWLGWSLGGLVATQAALYHPQRVSGLITVASSPCFTAQMAWPGIRSDVLYHFQSQLRDDFQRTVERFLALQTLGADSARQDTRALKSVVLAQPMPSAAVLNAGLSLLRETDLRPQLATLALPWLRFYGALDGLVPRRVAPLVDALSPCGRSLIIPGAAHAPFISHPEPFCAALCEFADGRSV.

The AB hydrolase-1 domain occupies 16 to 242; sequence LVLLHGWGLN…AAHAPFISHP (227 aa). Residues Trp-22, 82-83, and 143-147 each bind substrate; these read SL and FLALQ. The Nucleophile role is filled by Ser-82. Residues Asp-207 and His-235 contribute to the active site. Substrate is bound at residue His-235.

This sequence belongs to the AB hydrolase superfamily. Carboxylesterase BioH family. Monomer.

The protein resides in the cytoplasm. It catalyses the reaction 6-carboxyhexanoyl-[ACP] methyl ester + H2O = 6-carboxyhexanoyl-[ACP] + methanol + H(+). It functions in the pathway cofactor biosynthesis; biotin biosynthesis. Its function is as follows. The physiological role of BioH is to remove the methyl group introduced by BioC when the pimeloyl moiety is complete. It allows to synthesize pimeloyl-ACP via the fatty acid synthetic pathway through the hydrolysis of the ester bonds of pimeloyl-ACP esters. This is Pimeloyl-[acyl-carrier protein] methyl ester esterase from Edwardsiella ictaluri (strain 93-146).